Consider the following 665-residue polypeptide: Lamin-A (665 aa).

Met1 bears the N-acetylmethionine mark. The segment at 1 to 29 is head; it reads METPGQKRATRSTHTPLSPTRITRLQEKE. Ser18 bears the Phosphoserine mark. The IF rod domain occupies 27 to 383; it reads EKEDLQGLND…KLLEGEEERL (357 aa). Residues 30-66 are coil 1A; the sequence is DLQGLNDRLAVYIDKVRSLELENARLRLRITESEDVI. Positions 67 to 76 are linker 1; that stretch reads SREVTGIKSA. A coil 1B region spans residues 77-214; the sequence is YETELADARK…SIYNEEMRET (138 aa). The interval 215-238 is linker 2; it reads KRRHETRLVEVDNGRQREFESKLA. Residues 239-383 are coil 2; it reads DALHELRAQH…KLLEGEEERL (145 aa). 3 disordered regions span residues 381–441, 550–581, and 602–641; these read ERLR…SVEE, DDED…GEYN, and ASQG…LGES. The interval 384–664 is tail; sequence RLSPSPNTQK…AQVAPQNCSI (281 aa). Position 388 is a phosphoserine (Ser388). Over residues 399–411 the composition is skewed to low complexity; that stretch reads IASHSGAHISSSA. The short motif at 413–418 is the Nuclear localization signal element; that stretch reads KRRRLE. The region spanning 425–542 is the LTD domain; that stretch reads SSFTQHARTT…EEVAMRKLVR (118 aa). The span at 427–436 shows a compositional bias: polar residues; that stretch reads FTQHARTTGK. Low complexity predominate over residues 605-630; the sequence is GSGLVTGSSGSSSSSVTLTRTYRSTG. Cys662 carries the cysteine methyl ester modification. Cys662 is lipidated: S-farnesyl cysteine. The propeptide at 663–665 is removed in mature form; that stretch reads SIM.

It belongs to the intermediate filament family. Homodimer. Lamin dimers then assemble into dimeric head-to-tail polymers. Ultimately, two head-to-tail polymers assemble laterally into a protofilament with a uniformly shaped rod of 3.5 nm in diameter. Post-translationally, phosphorylation plays a key role in lamin organization, subcellular localization and nuclear envelope disintegration. Phosphorylation by CDK1 at Ser-18 at the onset of mitosis drives lamin disassembly and nuclear envelope breakdown.

The protein resides in the nucleus lamina. The protein localises to the nucleus envelope. It is found in the nucleus. Its subcellular location is the nucleoplasm. It localises to the nucleus matrix. In terms of biological role, lamins are intermediate filament proteins that assemble into a filamentous meshwork, and which constitute the major components of the nuclear lamina, a fibrous layer on the nucleoplasmic side of the inner nuclear membrane. Lamins provide a framework for the nuclear envelope, bridging the nuclear envelope and chromatin, thereby playing an important role in nuclear assembly, chromatin organization, nuclear membrane and telomere dynamics. The structural integrity of the lamina is strictly controlled by the cell cycle, as seen by the disintegration and formation of the nuclear envelope in prophase and telophase, respectively. This is Lamin-A (lmna) from Xenopus laevis (African clawed frog).